We begin with the raw amino-acid sequence, 304 residues long: Pyridoxal 5'-phosphate synthase subunit PdxS (304 aa).

Aspartate 34 serves as a coordination point for D-ribose 5-phosphate. Lysine 91 acts as the Schiff-base intermediate with D-ribose 5-phosphate in catalysis. Glycine 163 provides a ligand contact to D-ribose 5-phosphate. Arginine 175 contacts D-glyceraldehyde 3-phosphate. D-ribose 5-phosphate is bound by residues glycine 224 and 245–246 (GS).

The protein belongs to the PdxS/SNZ family. As to quaternary structure, in the presence of PdxT, forms a dodecamer of heterodimers.

The catalysed reaction is aldehydo-D-ribose 5-phosphate + D-glyceraldehyde 3-phosphate + L-glutamine = pyridoxal 5'-phosphate + L-glutamate + phosphate + 3 H2O + H(+). It participates in cofactor biosynthesis; pyridoxal 5'-phosphate biosynthesis. In terms of biological role, catalyzes the formation of pyridoxal 5'-phosphate from ribose 5-phosphate (RBP), glyceraldehyde 3-phosphate (G3P) and ammonia. The ammonia is provided by the PdxT subunit. Can also use ribulose 5-phosphate and dihydroxyacetone phosphate as substrates, resulting from enzyme-catalyzed isomerization of RBP and G3P, respectively. The protein is Pyridoxal 5'-phosphate synthase subunit PdxS of Cutibacterium acnes (strain DSM 16379 / KPA171202) (Propionibacterium acnes).